The primary structure comprises 165 residues: Large ribosomal subunit protein uL10 (165 aa).

It belongs to the universal ribosomal protein uL10 family. As to quaternary structure, part of the ribosomal stalk of the 50S ribosomal subunit. The N-terminus interacts with L11 and the large rRNA to form the base of the stalk. The C-terminus forms an elongated spine to which L12 dimers bind in a sequential fashion forming a multimeric L10(L12)X complex.

In terms of biological role, forms part of the ribosomal stalk, playing a central role in the interaction of the ribosome with GTP-bound translation factors. This chain is Large ribosomal subunit protein uL10, found in Hamiltonella defensa subsp. Acyrthosiphon pisum (strain 5AT).